The primary structure comprises 283 residues: Pantothenate synthetase (283 aa).

30 to 37 (MGYYHAGH) is a binding site for ATP. Residue histidine 37 is the Proton donor of the active site. Position 61 (glutamine 61) interacts with (R)-pantoate. Glutamine 61 provides a ligand contact to beta-alanine. 147–150 (GQKD) provides a ligand contact to ATP. Glutamine 153 is a (R)-pantoate binding site. Residues valine 176 and 184 to 187 (MSSR) contribute to the ATP site.

This sequence belongs to the pantothenate synthetase family. Homodimer.

It localises to the cytoplasm. The catalysed reaction is (R)-pantoate + beta-alanine + ATP = (R)-pantothenate + AMP + diphosphate + H(+). The protein operates within cofactor biosynthesis; (R)-pantothenate biosynthesis; (R)-pantothenate from (R)-pantoate and beta-alanine: step 1/1. Functionally, catalyzes the condensation of pantoate with beta-alanine in an ATP-dependent reaction via a pantoyl-adenylate intermediate. The protein is Pantothenate synthetase of Nitratidesulfovibrio vulgaris (strain ATCC 29579 / DSM 644 / CCUG 34227 / NCIMB 8303 / VKM B-1760 / Hildenborough) (Desulfovibrio vulgaris).